Reading from the N-terminus, the 165-residue chain is Natriuretic peptide Na-NP (165 aa).

Positions Met-1 to Gly-25 are cleaved as a signal peptide. A propeptide spanning residues Lys-26–Gln-83 is cleaved from the precursor. The segment covering Ser-56–His-68 has biased composition (basic and acidic residues). Disordered regions lie at residues Ser-56–Asp-100 and Pro-135–Ile-165. Cys-94 and Cys-110 form a disulfide bridge. A propeptide spanning residues Ile-129–Ile-165 is cleaved from the precursor. Over residues Pro-135 to His-149 the composition is skewed to basic and acidic residues. Residues Val-154–Ile-165 are compositionally biased toward gly residues.

This sequence belongs to the natriuretic peptide family. Expressed by the venom gland.

It is found in the secreted. Its function is as follows. Natriuretic peptide that dose-dependently induces the rapid relaxation of rat aortic strips phenylephrine-precontracted. Acts by stimulating cGMP production in a dose-dependent manner (by probably activating NPR1 and/or NPR2). May also show potent hypotensive effects. This is Natriuretic peptide Na-NP from Naja atra (Chinese cobra).